A 419-amino-acid chain; its full sequence is Protein phosphatase methylesterase 1 (419 aa).

The segment covering 1 to 12 has biased composition (basic residues); that stretch reads MSQLHRGMHKKP. Positions 1–75 are disordered; that stretch reads MSQLHRGMHK…KSAASPTVPA (75 aa). The span at 32 to 52 shows a compositional bias: acidic residues; it reads TETEETVECTEEEEEQDETDG. Catalysis depends on residues S230, D256, and H383.

Belongs to the AB hydrolase superfamily.

The enzyme catalyses [phosphatase 2A protein]-C-terminal L-leucine methyl ester + H2O = [phosphatase 2A protein]-C-terminal L-leucine + methanol + H(+). Its function is as follows. Demethylates proteins that have been reversibly carboxymethylated. Demethylates the phosphatase PP2A catalytic subunit. The sequence is that of Protein phosphatase methylesterase 1 (PPE1) from Yarrowia lipolytica (strain CLIB 122 / E 150) (Yeast).